Reading from the N-terminus, the 539-residue chain is GMP synthase [glutamine-hydrolyzing] (539 aa).

The region spanning 4–202 (KILILDFGSQ…VLQIAGCKPD (199 aa)) is the Glutamine amidotransferase type-1 domain. Cysteine 81 functions as the Nucleophile in the catalytic mechanism. Active-site residues include histidine 176 and glutamate 178. One can recognise a GMPS ATP-PPase domain in the interval 203–395 (WVMRDHIEEA…LGLPPEMVYR (193 aa)). An ATP-binding site is contributed by 230-236 (SGGVDSS).

Homodimer.

It carries out the reaction XMP + L-glutamine + ATP + H2O = GMP + L-glutamate + AMP + diphosphate + 2 H(+). The protein operates within purine metabolism; GMP biosynthesis; GMP from XMP (L-Gln route): step 1/1. In terms of biological role, catalyzes the synthesis of GMP from XMP. The polypeptide is GMP synthase [glutamine-hydrolyzing] (Cupriavidus taiwanensis (strain DSM 17343 / BCRC 17206 / CCUG 44338 / CIP 107171 / LMG 19424 / R1) (Ralstonia taiwanensis (strain LMG 19424))).